The following is a 37-amino-acid chain: Bactericidin B-3 (37 aa).

Glycine amide is present on Gly-37.

This sequence belongs to the cecropin family.

It localises to the secreted. Its function is as follows. Cecropins have lytic and antibacterial activity against several Gram-positive and Gram-negative bacteria. The polypeptide is Bactericidin B-3 (Manduca sexta (Tobacco hawkmoth)).